Reading from the N-terminus, the 472-residue chain is Eukaryotic translation initiation factor 2 subunit 3 (472 aa).

The residue at position 2 (Ala-2) is an N-acetylalanine. Ser-16 carries the post-translational modification Phosphoserine. The tr-type G domain maps to 39–248 (QATINIGTIG…IVKKIPVPPR (210 aa)). The interval 48-55 (GHVAHGKS) is G1. 51–56 (AHGKST) provides a ligand contact to GTP. A G2 region spans residues 76–80 (NITIK). Residues 134 to 137 (DCPG) form a G3 region. GTP-binding positions include 190-193 (NKID) and 225-227 (SAQ). The G4 stretch occupies residues 190 to 193 (NKID). Positions 225 to 227 (SAQ) are G5. Positions 457 to 469 (GQIRRGVTIKPTV) are interacts with CDC123.

The protein belongs to the TRAFAC class translation factor GTPase superfamily. Classic translation factor GTPase family. EIF2G subfamily. Eukaryotic translation initiation factor 2 eIF2 is a heterotrimeric complex composed of an alpha (EIF2S1), a beta (EIF2S2) and a gamma (EIF2S3) chain. eIF2 is member of the 43S pre-initiation complex (43S PIC). Interacts (via C-terminus) with CDC123; the interaction is direct.

Its subcellular location is the cytoplasm. It localises to the cytosol. It carries out the reaction GTP + H2O = GDP + phosphate + H(+). Member of the eIF2 complex that functions in the early steps of protein synthesis by forming a ternary complex with GTP and initiator tRNA. This complex binds to a 40S ribosomal subunit, followed by mRNA binding to form the 43S pre-initiation complex (43S PIC). Junction of the 60S ribosomal subunit to form the 80S initiation complex is preceded by hydrolysis of the GTP bound to eIF2 and release of an eIF2-GDP binary complex. In order for eIF2 to recycle and catalyze another round of initiation, the GDP bound to eIF2 must exchange with GTP by way of a reaction catalyzed by eIF-2B. The sequence is that of Eukaryotic translation initiation factor 2 subunit 3 (EIF2S3) from Bos taurus (Bovine).